A 36-amino-acid chain; its full sequence is Photosystem II reaction center protein Psb30 (36 aa).

Residues 8–28 traverse the membrane as a helical segment; that stretch reads IIAQLTVVTLTLLAGPVIVFL.

Belongs to the Psb30/Ycf12 family. As to quaternary structure, PSII is composed of 1 copy each of membrane proteins PsbA, PsbB, PsbC, PsbD, PsbE, PsbF, PsbH, PsbI, PsbJ, PsbK, PsbL, PsbM, PsbT, PsbX, PsbY, PsbZ, Psb30/Ycf12, peripheral proteins of the oxygen-evolving complex and a large number of cofactors. It forms dimeric complexes.

Its subcellular location is the plastid. It is found in the cyanelle thylakoid membrane. In terms of biological role, a core subunit of photosystem II (PSII), probably helps stabilize the reaction center. The protein is Photosystem II reaction center protein Psb30 of Cyanophora paradoxa.